Consider the following 302-residue polypeptide: Putative receptor-like protein 16 (302 aa).

LRR repeat units follow at residues 1–19, 20–43, and 45–70; these read MNLT…LGNM, EMIE…FLKG, and DSLI…NFFS. One copy of the LRR 4; degenerate repeat lies at 72–91; sequence LELSMDNNLFTGKIGRGLQS. LRR repeat units follow at residues 92 to 115, 116 to 140, 142 to 164, 166 to 188, 190 to 211, 213 to 234, and 235 to 258; these read LRSL…WFDQ, LQDL…LFNM, SLQL…ISGY, ALKV…LLGK, IIVL…INTQ, IRIL…LCAV, and RSIH…LRNA.

The protein belongs to the RLP family.

In Arabidopsis thaliana (Mouse-ear cress), this protein is Putative receptor-like protein 16.